Consider the following 226-residue polypeptide: Sugar transporter SWEET1 (226 aa).

The next 7 membrane-spanning stretches (helical) occupy residues 8-28 (LLSTTAVISTVFQFLSGAMIC), 42-62 (GVPFICGFLSCSFWLRYGVLT), 67-87 (IVLVNIIGSTLFLIYTLIYYV), 94-114 (AFVRQFAFVLAVLIAVVVVYT), 127-147 (ITGIFCCIVTVCFFAAPLATL), 161-181 (LPLIATSFLVSLQWLIYGILI), and 185-205 (FIQIPNFLGCLLSMLQLSLFV). A MtN3/slv 1 domain is found at 8–92 (LLSTTAVIST…LIYYVFTVNK (85 aa)). The 82-residue stretch at 129 to 210 (GIFCCIVTVC…LSLFVVYPPR (82 aa)) folds into the MtN3/slv 2 domain.

The protein belongs to the SWEET sugar transporter family.

It localises to the golgi apparatus membrane. Its subcellular location is the cell membrane. In terms of biological role, mediates both low-affinity uptake and efflux of sugar across the membrane. This chain is Sugar transporter SWEET1 (slv), found in Drosophila pseudoobscura pseudoobscura (Fruit fly).